Reading from the N-terminus, the 253-residue chain is Sulfate transporter CysZ (253 aa).

The next 4 membrane-spanning stretches (helical) occupy residues 31–51 (FVIL…WWLF), 72–92 (LSYI…GYFF), 151–171 (IVLL…PVLW), and 222–242 (IPVL…AMWV).

Belongs to the CysZ family.

The protein resides in the cell inner membrane. Its function is as follows. High affinity, high specificity proton-dependent sulfate transporter, which mediates sulfate uptake. Provides the sulfur source for the cysteine synthesis pathway. In Escherichia fergusonii (strain ATCC 35469 / DSM 13698 / CCUG 18766 / IAM 14443 / JCM 21226 / LMG 7866 / NBRC 102419 / NCTC 12128 / CDC 0568-73), this protein is Sulfate transporter CysZ.